Reading from the N-terminus, the 89-residue chain is Small ribosomal subunit protein uS15 (89 aa).

This sequence belongs to the universal ribosomal protein uS15 family. Part of the 30S ribosomal subunit. Forms a bridge to the 50S subunit in the 70S ribosome, contacting the 23S rRNA.

Functionally, one of the primary rRNA binding proteins, it binds directly to 16S rRNA where it helps nucleate assembly of the platform of the 30S subunit by binding and bridging several RNA helices of the 16S rRNA. In terms of biological role, forms an intersubunit bridge (bridge B4) with the 23S rRNA of the 50S subunit in the ribosome. In Bdellovibrio bacteriovorus (strain ATCC 15356 / DSM 50701 / NCIMB 9529 / HD100), this protein is Small ribosomal subunit protein uS15.